The sequence spans 124 residues: Hydrogenase maturation factor HypA (124 aa).

Position 2 (His2) interacts with Ni(2+). Cys78, Cys81, Cys97, and Cys100 together coordinate Zn(2+).

Belongs to the HypA/HybF family.

Involved in the maturation of [NiFe] hydrogenases. Required for nickel insertion into the metal center of the hydrogenase. The polypeptide is Hydrogenase maturation factor HypA (Methanococcus vannielii (strain ATCC 35089 / DSM 1224 / JCM 13029 / OCM 148 / SB)).